We begin with the raw amino-acid sequence, 335 residues long: tRNA N6-adenosine threonylcarbamoyltransferase (335 aa).

3 residues coordinate a divalent metal cation: His109, His113, and Tyr130. Substrate contacts are provided by residues 130–134 (YVSGG), Asp162, Gly177, Glu181, and Asn266. Asp294 is a binding site for a divalent metal cation.

This sequence belongs to the KAE1 / TsaD family. As to quaternary structure, component of the EKC/KEOPS complex composed of at least tp53rk, tprkb, osgep and lage3; the whole complex dimerizes. Requires a divalent metal cation as cofactor.

It is found in the cytoplasm. Its subcellular location is the nucleus. The catalysed reaction is L-threonylcarbamoyladenylate + adenosine(37) in tRNA = N(6)-L-threonylcarbamoyladenosine(37) in tRNA + AMP + H(+). In terms of biological role, component of the EKC/KEOPS complex that is required for the formation of a threonylcarbamoyl group on adenosine at position 37 (t(6)A37) in tRNAs that read codons beginning with adenine. The complex is probably involved in the transfer of the threonylcarbamoyl moiety of threonylcarbamoyl-AMP (TC-AMP) to the N6 group of A37. OSGEP likely plays a direct catalytic role in this reaction, but requires other protein(s) of the complex to fulfill this activity. This chain is tRNA N6-adenosine threonylcarbamoyltransferase, found in Danio rerio (Zebrafish).